Here is a 223-residue protein sequence, read N- to C-terminus: Putative NAD(P)H nitroreductase SAUSA300_2462 (223 aa).

This sequence belongs to the nitroreductase family. It depends on FMN as a cofactor.

The chain is Putative NAD(P)H nitroreductase SAUSA300_2462 from Staphylococcus aureus (strain USA300).